The primary structure comprises 161 residues: Lipid droplet assembly factor 1 (161 aa).

Topologically, residues 1–43 (MAKEEPQSISRDLQELQKKLSLLIDSFQNNSKVVAFMKSPVGQ) are cytoplasmic. The helical transmembrane segment at 44 to 61 (YLDSHPFLAFTLLVFIVM) threads the bilayer. Residues 62 to 67 (SAVPVG) lie on the Lumenal side of the membrane. The helical transmembrane segment at 68–87 (FFLLIVVLTTLAALLGVIIL) threads the bilayer. The Cytoplasmic portion of the chain corresponds to 88–93 (EGLVIS). Residues 94–110 (VGGFSLLCILCGLGFVS) traverse the membrane as a helical segment. Residues 111 to 116 (LAMSGM) are Lumenal-facing. The chain crosses the membrane as a helical span at residues 117–133 (MIASYVVVSSLISCWFS). Topologically, residues 134-161 (PRPLTQQNTSCDFLPAMKSAEFEGLYQE) are cytoplasmic.

It belongs to the LDAF1 family. Interacts with isoform 1 and isoform 3 of BSCL2/seipin to form an oligomeric complex. In terms of tissue distribution, expressed at high levels in the heart and skeletal muscle. Expressed at low levels in kidney, small intestine, lung and liver.

The protein resides in the endoplasmic reticulum membrane. It is found in the lipid droplet. Its function is as follows. Plays an important role in the formation of lipid droplets (LD) which are storage organelles at the center of lipid and energy homeostasis. In association with BSCL2/seipin, defines the sites of LD formation in the endoplasmic reticulum. The chain is Lipid droplet assembly factor 1 from Homo sapiens (Human).